A 1930-amino-acid chain; its full sequence is Myosin-16 (1930 aa).

One can recognise a Myosin N-terminal SH3-like domain in the interval 35 to 84 (DIKKSCWVKDEKEGFIAGEIQSEQGDQVTVKTVNNQTVTVKKDDVQQMNP). Residues 88–774 (YQASDMADMT…ILAKLEDMRD (687 aa)) form the Myosin motor domain. 181-188 (GESGAGKT) is an ATP binding site. 2 actin-binding regions span residues 652 to 674 (LNKLMATLHSTAPHFVRCIVPNE) and 753 to 767 (KIGHTKVFFRAGILA). Residues 777 to 806 (LAKIMTMLQCRLRGFLMRIEFKKMLERRIG) form the IQ domain. Residues 835–1921 (LLNVARQEEE…ALNKLRTRHR (1087 aa)) adopt a coiled-coil conformation. The interval 1116–1137 (EELEAERSMRAKVEKQRSDLSR) is disordered. Residues 1120-1137 (AERSMRAKVEKQRSDLSR) show a composition bias toward basic and acidic residues.

It belongs to the TRAFAC class myosin-kinesin ATPase superfamily. Myosin family.

Its subcellular location is the cytoplasm. The protein resides in the myofibril. Its function is as follows. May play a role in masticatory muscles contraction. This Canis lupus familiaris (Dog) protein is Myosin-16.